A 387-amino-acid chain; its full sequence is Dual-specificity RNA methyltransferase RlmN (387 aa).

The active-site Proton acceptor is Glu93. The region spanning 99–343 is the Radical SAM core domain; sequence EENRGTLCIS…TTVRKTRGDD (245 aa). Cys106 and Cys348 are oxidised to a cystine. [4Fe-4S] cluster is bound by residues Cys113, Cys117, and Cys120. Residues 172–173, Ser204, 226–228, and Asn305 contribute to the S-adenosyl-L-methionine site; these read GE and SLH. Cys348 serves as the catalytic S-methylcysteine intermediate.

Belongs to the radical SAM superfamily. RlmN family. [4Fe-4S] cluster is required as a cofactor.

The protein localises to the cytoplasm. The enzyme catalyses adenosine(2503) in 23S rRNA + 2 reduced [2Fe-2S]-[ferredoxin] + 2 S-adenosyl-L-methionine = 2-methyladenosine(2503) in 23S rRNA + 5'-deoxyadenosine + L-methionine + 2 oxidized [2Fe-2S]-[ferredoxin] + S-adenosyl-L-homocysteine. It carries out the reaction adenosine(37) in tRNA + 2 reduced [2Fe-2S]-[ferredoxin] + 2 S-adenosyl-L-methionine = 2-methyladenosine(37) in tRNA + 5'-deoxyadenosine + L-methionine + 2 oxidized [2Fe-2S]-[ferredoxin] + S-adenosyl-L-homocysteine. Functionally, specifically methylates position 2 of adenine 2503 in 23S rRNA and position 2 of adenine 37 in tRNAs. m2A2503 modification seems to play a crucial role in the proofreading step occurring at the peptidyl transferase center and thus would serve to optimize ribosomal fidelity. This Janthinobacterium sp. (strain Marseille) (Minibacterium massiliensis) protein is Dual-specificity RNA methyltransferase RlmN.